A 429-amino-acid chain; its full sequence is Enolase (429 aa).

Q162 is a (2R)-2-phosphoglycerate binding site. E204 (proton donor) is an active-site residue. Mg(2+) is bound by residues D241, E286, and D313. (2R)-2-phosphoglycerate is bound by residues K338, R367, S368, and K389. K338 acts as the Proton acceptor in catalysis.

Belongs to the enolase family. It depends on Mg(2+) as a cofactor.

It is found in the cytoplasm. It localises to the secreted. The protein resides in the cell surface. The catalysed reaction is (2R)-2-phosphoglycerate = phosphoenolpyruvate + H2O. It participates in carbohydrate degradation; glycolysis; pyruvate from D-glyceraldehyde 3-phosphate: step 4/5. Its function is as follows. Catalyzes the reversible conversion of 2-phosphoglycerate (2-PG) into phosphoenolpyruvate (PEP). It is essential for the degradation of carbohydrates via glycolysis. This chain is Enolase, found in Halalkalibacterium halodurans (strain ATCC BAA-125 / DSM 18197 / FERM 7344 / JCM 9153 / C-125) (Bacillus halodurans).